A 269-amino-acid polypeptide reads, in one-letter code: Formamidopyrimidine-DNA glycosylase (269 aa).

Pro2 functions as the Schiff-base intermediate with DNA in the catalytic mechanism. The active-site Proton donor is Glu3. The active-site Proton donor; for beta-elimination activity is Lys58. DNA-binding residues include His91, Arg110, and Lys150. The FPG-type zinc finger occupies 235 to 269 (SVYGCENKTCHFCKSKIIKIVQNQRSTFYCRKCQT). The active-site Proton donor; for delta-elimination activity is Arg259.

This sequence belongs to the FPG family. As to quaternary structure, monomer. Zn(2+) is required as a cofactor.

It carries out the reaction Hydrolysis of DNA containing ring-opened 7-methylguanine residues, releasing 2,6-diamino-4-hydroxy-5-(N-methyl)formamidopyrimidine.. The catalysed reaction is 2'-deoxyribonucleotide-(2'-deoxyribose 5'-phosphate)-2'-deoxyribonucleotide-DNA = a 3'-end 2'-deoxyribonucleotide-(2,3-dehydro-2,3-deoxyribose 5'-phosphate)-DNA + a 5'-end 5'-phospho-2'-deoxyribonucleoside-DNA + H(+). Involved in base excision repair of DNA damaged by oxidation or by mutagenic agents. Acts as a DNA glycosylase that recognizes and removes damaged bases. Has a preference for oxidized purines, such as 7,8-dihydro-8-oxoguanine (8-oxoG). Has AP (apurinic/apyrimidinic) lyase activity and introduces nicks in the DNA strand. Cleaves the DNA backbone by beta-delta elimination to generate a single-strand break at the site of the removed base with both 3'- and 5'-phosphates. The polypeptide is Formamidopyrimidine-DNA glycosylase (Ruthia magnifica subsp. Calyptogena magnifica).